Here is a 268-residue protein sequence, read N- to C-terminus: MEFAHLTVLSLFCLAFVGITATSSEEDYWQSIWPNTPLPKTFSDLLIPSGKTNSLPIKSEELKQYSTLFFEHDLHPRKNFILGNTNSVGSIIRPFTKSRQGVTDSIWLANKEKQSFEDFCYSPTAIAEHKHCVSSLKSMIDQVISHFGSTKIKAISSNFAPYQDQYVVEDVKKVGDNAVMCHRLNFEKVVFNCHQVRETTAYVVSLVASDGTKTKALTVCHHDTRGMNPELLYEALEVTPGTVPVCHFIGNKAAAWVPNHTADNLCVM.

Residues 1-22 (MEFAHLTVLSLFCLAFVGITAT) form the signal peptide. Tandem repeats lie at residues 50–55 (GKTNSL), 83–88 (GNTNSV), 101–106 (GVTDSI), 166–183 (YVVE…MCHR), and 202–222 (YVVS…VCHH). The 3 X 6 AA approximate repeats stretch occupies residues 50–106 (GKTNSLPIKSEELKQYSTLFFEHDLHPRKNFILGNTNSVGSIIRPFTKSRQGVTDSI). The 192-residue stretch at 68–259 (LFFEHDLHPR…GNKAAAWVPN (192 aa)) folds into the BURP domain. Residues 166-222 (YVVEDVKKVGDNAVMCHRLNFEKVVFNCHQVRETTAYVVSLVASDGTKTKALTVCHH) are 2 X approximate repeats. A glycan (N-linked (GlcNAc...) asparagine) is linked at asparagine 259.

As to expression, seed.

The chain is Embryonic abundant protein USP92 from Vicia faba (Broad bean).